Reading from the N-terminus, the 317-residue chain is tRNA pseudouridine synthase B (317 aa).

The active-site Nucleophile is Asp-47.

It belongs to the pseudouridine synthase TruB family. Type 1 subfamily.

It catalyses the reaction uridine(55) in tRNA = pseudouridine(55) in tRNA. Functionally, responsible for synthesis of pseudouridine from uracil-55 in the psi GC loop of transfer RNAs. The polypeptide is tRNA pseudouridine synthase B (Vibrio atlanticus (strain LGP32) (Vibrio splendidus (strain Mel32))).